The chain runs to 190 residues: Protein A52 (190 aa).

This sequence belongs to the orthopoxvirus A52R protein family. As to quaternary structure, interacts with host TRAF6 and IRAK2.

In terms of biological role, bcl-2-like protein which targets host toll-like receptor signaling complexes to suppress innate immune response. Interacts with host TRAF6 to activate p38 and subsequently induce the expression of several cytokines such as IL-10. Also associates with host IRAK2 to inhibit NF-kappa-B signaling. This chain is Protein A52, found in Vaccinia virus (strain Western Reserve) (VACV).